The following is a 563-amino-acid chain: Pyruvate decarboxylase isozyme 3 (563 aa).

At Ser2 the chain carries N-acetylserine. Asp28 and His115 together coordinate pyruvate. Lys212 is covalently cross-linked (Glycyl lysine isopeptide (Lys-Gly) (interchain with G-Cter in ubiquitin)). Ser223 is modified (phosphoserine). Lys233 is covalently cross-linked (Glycyl lysine isopeptide (Lys-Gly) (interchain with G-Cter in ubiquitin)). A Phosphothreonine modification is found at Thr266. Lys269 is covalently cross-linked (Glycyl lysine isopeptide (Lys-Gly) (interchain with G-Cter in ubiquitin)). Thr353 carries the post-translational modification Phosphothreonine. Thiamine diphosphate is bound by residues Thr390 and 413–415 (GSI). A Mg(2+)-binding site is contributed by Asp444. Residues 445–446 (GS) and 471–476 (NDGYTI) contribute to the thiamine diphosphate site. Mg(2+) contacts are provided by Asn471 and Gly473. Glu477 is a binding site for pyruvate. Lys505 participates in a covalent cross-link: Glycyl lysine isopeptide (Lys-Gly) (interchain with G-Cter in ubiquitin). Position 522 is a phosphothreonine (Thr522).

The protein belongs to the TPP enzyme family. In terms of assembly, homotetramer. Requires Mg(2+) as cofactor. Thiamine diphosphate serves as cofactor.

The protein localises to the cytoplasm. The catalysed reaction is pyruvate + H(+) = acetaldehyde + CO2. The enzyme catalyses 3-methyl-2-oxobutanoate + H(+) = 2-methylpropanal + CO2. It carries out the reaction (S)-3-methyl-2-oxopentanoate + H(+) = 2-methylbutanal + CO2. It catalyses the reaction indole-3-pyruvate + H(+) = indole-3-acetaldehyde + CO2. The catalysed reaction is 3-phenylpyruvate + H(+) = 2-phenylacetaldehyde + CO2. The enzyme catalyses 2-oxobutanoate + H(+) = propanal + CO2. It carries out the reaction 2-oxopentanoate + H(+) = butanal + CO2. It catalyses the reaction 2 acetaldehyde = acetoin. The catalysed reaction is acetaldehyde + pyruvate + H(+) = acetoin + CO2. Its pathway is fermentation; ethanol fermentation. It functions in the pathway amino-acid degradation; Ehrlich pathway. Functionally, minor of three pyruvate decarboxylases (PDC1, PDC5, PDC6) implicated in the nonoxidative conversion of pyruvate to acetaldehyde and carbon dioxide during alcoholic fermentation. Most of the produced acetaldehyde is subsequently reduced to ethanol, but some is required for cytosolic acetyl-CoA production for biosynthetic pathways. The enzyme is also one of five 2-oxo acid decarboxylases (PDC1, PDC5, PDC6, ARO10, and THI3) able to decarboxylate more complex 2-oxo acids (alpha-keto-acids) than pyruvate, which seem mainly involved in amino acid catabolism. Here the enzyme catalyzes the decarboxylation of amino acids, which, in a first step, have been transaminated to the corresponding 2-oxo acids. In a third step, the resulting aldehydes are reduced to alcohols, collectively referred to as fusel oils or alcohols. Its preferred substrates are the transaminated amino acids derived from threonine (2-oxobutanoate), norvaline (2-oxopentanoate), valine (3-methyl-2-oxobutanoate, also alpha-keto-isovalerate), isoleucine ((3S)-3-methyl-2-oxopentanoate, also alpha-keto-beta-methylvalerate), phenylalanine (phenylpyruvate), and tryptophan (3-(indol-3-yl)pyruvate), whereas transaminated leucine is no substrate. In a side-reaction the carbanionic intermediate (or active aldehyde) generated by decarboxylation or by activation of an aldehyde can react with an aldehyde via condensation (or carboligation) yielding a 2-hydroxy ketone, collectively called acyloins. The expression level of this protein in the presence of fermentable carbon sources is so low that it cannot compensate for the other two pyruvate decarboxylases to sustain fermentation. The protein is Pyruvate decarboxylase isozyme 3 (PDC6) of Saccharomyces cerevisiae (strain ATCC 204508 / S288c) (Baker's yeast).